Here is a 63-residue protein sequence, read N- to C-terminus: Large ribosomal subunit protein bL28 (63 aa).

The protein belongs to the bacterial ribosomal protein bL28 family.

The sequence is that of Large ribosomal subunit protein bL28 from Treponema denticola (strain ATCC 35405 / DSM 14222 / CIP 103919 / JCM 8153 / KCTC 15104).